We begin with the raw amino-acid sequence, 253 residues long: Probable transcriptional regulatory protein Tery_2125 (253 aa).

Belongs to the TACO1 family.

The protein resides in the cytoplasm. The protein is Probable transcriptional regulatory protein Tery_2125 of Trichodesmium erythraeum (strain IMS101).